We begin with the raw amino-acid sequence, 507 residues long: ATP synthase subunit alpha, chloroplastic (507 aa).

Residue Gly-170–Thr-177 participates in ATP binding.

Belongs to the ATPase alpha/beta chains family. In terms of assembly, F-type ATPases have 2 components, CF(1) - the catalytic core - and CF(0) - the membrane proton channel. CF(1) has five subunits: alpha(3), beta(3), gamma(1), delta(1), epsilon(1). CF(0) has four main subunits: a, b, b' and c.

It localises to the plastid. The protein localises to the chloroplast thylakoid membrane. The catalysed reaction is ATP + H2O + 4 H(+)(in) = ADP + phosphate + 5 H(+)(out). Functionally, produces ATP from ADP in the presence of a proton gradient across the membrane. The alpha chain is a regulatory subunit. This Dioscorea elephantipes (Elephant's foot yam) protein is ATP synthase subunit alpha, chloroplastic.